Consider the following 173-residue polypeptide: Cytochrome c homolog (173 aa).

At 1–8 (MSGKELNK) the chain is on the cytoplasmic side. Residues 9–29 (IVAAILFASLIAMMVGFIANI) form a helical; Signal-anchor membrane-spanning segment. Residues 30 to 173 (LYKPVLEPKH…LFLKTYVHDK (144 aa)) are Periplasmic-facing. Residues cysteine 82, cysteine 85, histidine 86, and methionine 148 each contribute to the heme c site.

The protein belongs to the cytochrome c family. Post-translationally, binds 1 heme c group covalently per subunit.

The protein resides in the cell membrane. Its function is as follows. May be involved in electron transfer from bc1 complex to aa3. The polypeptide is Cytochrome c homolog (cycM) (Rickettsia bellii (strain RML369-C)).